Reading from the N-terminus, the 360-residue chain is Phosphoserine aminotransferase (360 aa).

R42 lines the L-glutamate pocket. Pyridoxal 5'-phosphate-binding residues include W102, T152, D171, and Q194. K195 carries the post-translational modification N6-(pyridoxal phosphate)lysine. 237 to 238 (NT) contributes to the pyridoxal 5'-phosphate binding site.

Belongs to the class-V pyridoxal-phosphate-dependent aminotransferase family. SerC subfamily. In terms of assembly, homodimer. Pyridoxal 5'-phosphate is required as a cofactor.

The protein resides in the cytoplasm. The catalysed reaction is O-phospho-L-serine + 2-oxoglutarate = 3-phosphooxypyruvate + L-glutamate. It catalyses the reaction 4-(phosphooxy)-L-threonine + 2-oxoglutarate = (R)-3-hydroxy-2-oxo-4-phosphooxybutanoate + L-glutamate. Its pathway is amino-acid biosynthesis; L-serine biosynthesis; L-serine from 3-phospho-D-glycerate: step 2/3. The protein operates within cofactor biosynthesis; pyridoxine 5'-phosphate biosynthesis; pyridoxine 5'-phosphate from D-erythrose 4-phosphate: step 3/5. Its function is as follows. Catalyzes the reversible conversion of 3-phosphohydroxypyruvate to phosphoserine and of 3-hydroxy-2-oxo-4-phosphonooxybutanoate to phosphohydroxythreonine. The polypeptide is Phosphoserine aminotransferase (Coxiella burnetii (strain CbuG_Q212) (Coxiella burnetii (strain Q212))).